The primary structure comprises 359 residues: Golgi-resident adenosine 3',5'-bisphosphate 3'-phosphatase (359 aa).

Met1 bears the N-acetylmethionine mark. Residues 1–12 (MAPMGIRLSPLG) lie on the Cytoplasmic side of the membrane. A helical transmembrane segment spans residues 13–33 (VAVFCLLGLGVLYHLYSGFLA). Over 34-359 (GRFSLFGLGG…LPDLEKTGHK (326 aa)) the chain is Lumenal. The tract at residues 86–106 (ESNVLHEKSKGKTREGAEDKM) is disordered. The Proton acceptor role is filled by Asp110. The Mg(2+) site is built by Glu133, Asp174, Leu176, and Asp177. The Proton acceptor role is filled by Thr179. AMP-binding residues include Ser242 and His245. Asn259 is a glycosylation site (N-linked (GlcNAc...) asparagine). 2 residues coordinate AMP: Gly268 and Lys272. Residue Asp300 participates in Mg(2+) binding.

This sequence belongs to the inositol monophosphatase superfamily. Mg(2+) serves as cofactor. Post-translationally, contains N-linked glycan resistant to endoglycosydase H.

It localises to the golgi apparatus. Its subcellular location is the trans-Golgi network membrane. The catalysed reaction is adenosine 3',5'-bisphosphate + H2O = AMP + phosphate. It functions in the pathway sulfur metabolism. Its activity is regulated as follows. Strongly inhibited by lithium. In terms of biological role, exhibits 3'-nucleotidase activity toward adenosine 3',5'-bisphosphate (PAP), namely hydrolyzes adenosine 3',5'-bisphosphate into adenosine 5'-monophosphate (AMP) and a phosphate. May play a role in the formation of skeletal elements derived through endochondral ossification, possibly by clearing adenosine 3',5'-bisphosphate produced by Golgi sulfotransferases during glycosaminoglycan sulfation. Has no activity toward 3'-phosphoadenosine 5'-phosphosulfate (PAPS) or inositol phosphate (IP) substrates including I(1)P, I(1,4)P2, I(1,3,4)P3, I(1,4,5)P3 and I(1,3,4,5)P4. The chain is Golgi-resident adenosine 3',5'-bisphosphate 3'-phosphatase from Homo sapiens (Human).